The sequence spans 162 residues: Ribosome maturation factor RimP (162 aa).

This sequence belongs to the RimP family.

It localises to the cytoplasm. Required for maturation of 30S ribosomal subunits. The chain is Ribosome maturation factor RimP from Cupriavidus necator (strain ATCC 17699 / DSM 428 / KCTC 22496 / NCIMB 10442 / H16 / Stanier 337) (Ralstonia eutropha).